A 558-amino-acid polypeptide reads, in one-letter code: Arginine--tRNA ligase (558 aa).

The short motif at 129–139 (ANPTGPLHVGH) is the 'HIGH' region element.

It belongs to the class-I aminoacyl-tRNA synthetase family. Monomer.

Its subcellular location is the cytoplasm. It carries out the reaction tRNA(Arg) + L-arginine + ATP = L-arginyl-tRNA(Arg) + AMP + diphosphate. The polypeptide is Arginine--tRNA ligase (Polaromonas naphthalenivorans (strain CJ2)).